The sequence spans 343 residues: MMLFSVRFISGFVFGAGSGVAALKLYYYEEQQTHTGSSVHRVIGRFGLPESGAESRFYTNHVLSYDQTHRTPRWVAEHLSSTRLLGEANRKQCKFRPDPSVPELFTAHNEDYLKSGWSRGHMAPAGDNKSSEQAMAETFYLSNIVPQNYENNAGFWNRLEMYCRELTEKFSDVWVVSGPLMKPQITDDGKKTVSYQLIGKDEVAVPTHLYKVILAQKDPSSDALAVGAFVVPNAPIGFQHQLQEFQVSVCDLERESGLVFFPALQKQQLSDLCTVDSCQLMDFRRFSLYISSRKMQSANSVYRLEKILAELQEAGIAPDEHLKQIYQQRRTELERRQDTNTHT.

His121 functions as the Proton acceptor in the catalytic mechanism. Asn152 serves as a coordination point for a divalent metal cation.

The protein belongs to the DNA/RNA non-specific endonuclease family. In terms of assembly, homodimer. Requires a divalent metal cation as cofactor.

It localises to the mitochondrion inner membrane. Its function is as follows. Endo/exonuclease with nicking activity towards supercoiled DNA, a preference for single-stranded DNA and 5'-3' exonuclease activity. This Danio rerio (Zebrafish) protein is Nuclease EXOG, mitochondrial (exog).